The following is a 380-amino-acid chain: Serpin B7 (380 aa).

S217 bears the Phosphoserine mark.

It belongs to the serpin family. Ov-serpin subfamily.

It is found in the cytoplasm. In terms of biological role, might function as an inhibitor of Lys-specific proteases. Might influence the maturation of megakaryocytes via its action as a serpin. This chain is Serpin B7 (Serpinb7), found in Mus musculus (Mouse).